The chain runs to 1211 residues: Diacylglycerol kinase eta (1211 aa).

A disordered region spans residues 1 to 66; that stretch reads MAGAGSQHHP…QMRTKTSIKE (66 aa). The span at 19-32 shows a compositional bias: low complexity; sequence AGASAVSPTAAGPG. Over residues 52–61 the composition is skewed to polar residues; that stretch reads VSTSGQMRTK. Residues 62 to 155 form the PH domain; sequence TSIKEGQLLK…WISSLKSVQS (94 aa). 2 consecutive Phorbol-ester/DAG-type zinc fingers follow at residues 172 to 222 and 244 to 295; these read MHNW…TNNC and PHQW…HPVC. The DAGKc domain occupies 325-460; it reads FCVSPLLVFV…LDRWSIMTYE (136 aa). Disordered stretches follow at residues 562 to 613 and 634 to 694; these read SQAS…KPRE and KVMD…SVAG. Acidic residues-rich tracts occupy residues 576 to 589 and 653 to 662; these read PEED…DESL and YDTETDEAKE. Over residues 670 to 691 the composition is skewed to polar residues; sequence SAKTTSQSPDAQASCGHPQTDS. In terms of domain architecture, SAM spans 1143–1206; sequence WGTEEVAAWL…LQGIKELERN (64 aa).

It belongs to the eukaryotic diacylglycerol kinase family. In terms of assembly, interacts with RAF1 and BRAF. Homooligomers. Heterooligomers. Oligomerization through the SAM domain inhibits the diacylglycerol kinase activity. Heterooligomerizes with SAM domain-containing isoforms of DGKD. As to quaternary structure, does not form homooligomers. In terms of processing, phosphorylated. Phosphorylation does not inhibit catalytic activity. Widely expressed. Detected in the granulosa cells of the primary and secondary follicles. Expressed in mature follicles and corpus lutea. Expressed in the oviductal epithelium. In the uterus, strongly expressed in the luminal epithelium. Detected in the uterine glands. As to expression, detected in ovary and uterus (at protein level). In terms of tissue distribution, specifically expressed in testis. Detected in the inner area of the testis. Strongly expressed in the secondary spermatocytes and the round spermatids and weakly detected in the primary spermatocytes.

It is found in the cytoplasm. The protein localises to the cell membrane. Its subcellular location is the cytoskeleton. It catalyses the reaction a 1,2-diacyl-sn-glycerol + ATP = a 1,2-diacyl-sn-glycero-3-phosphate + ADP + H(+). The enzyme catalyses 1,2-di-(9Z-octadecenoyl)-sn-glycerol + ATP = 1,2-di-(9Z-octadecenoyl)-sn-glycero-3-phosphate + ADP + H(+). Its pathway is lipid metabolism; glycerolipid metabolism. In terms of biological role, diacylglycerol kinase that converts diacylglycerol/DAG into phosphatidic acid/phosphatidate/PA and regulates the respective levels of these two bioactive lipids. Thereby, acts as a central switch between the signaling pathways activated by these second messengers with different cellular targets and opposite effects in numerous biological processes. Plays a key role in promoting cell growth. Activates the Ras/B-Raf/C-Raf/MEK/ERK signaling pathway induced by EGF. Regulates the recruitment of RAF1 and BRAF from cytoplasm to membranes and their heterodimerization. This Mus musculus (Mouse) protein is Diacylglycerol kinase eta.